Reading from the N-terminus, the 298-residue chain is Acetylglutamate kinase (298 aa).

Substrate-binding positions include 69 to 70 (GG), arginine 91, and asparagine 196.

The protein belongs to the acetylglutamate kinase family. ArgB subfamily.

It is found in the cytoplasm. It catalyses the reaction N-acetyl-L-glutamate + ATP = N-acetyl-L-glutamyl 5-phosphate + ADP. It participates in amino-acid biosynthesis; L-arginine biosynthesis; N(2)-acetyl-L-ornithine from L-glutamate: step 2/4. In terms of biological role, catalyzes the ATP-dependent phosphorylation of N-acetyl-L-glutamate. The sequence is that of Acetylglutamate kinase from Granulibacter bethesdensis (strain ATCC BAA-1260 / CGDNIH1).